The following is a 377-amino-acid chain: Guanine nucleotide-binding protein subunit alpha-13 (377 aa).

Residues Cys14 and Cys18 are each lipidated (S-palmitoyl cysteine). Positions 47–377 (RLVKILLLGA…HDNLKQLMLQ (331 aa)) constitute a G-alpha domain. Residues 50–63 (KILLLGAGESGKST) are G1 motif. Residues 58–63 (ESGKST), Ser173, and 197–200 (LLAR) contribute to the GTP site. Residue Ser62 coordinates Mg(2+). The tract at residues 195–203 (DILLARRPT) is G2 motif. A Mg(2+)-binding site is contributed by Thr203. Thr203 carries the post-translational modification Phosphothreonine; by PKA. A G3 motif region spans residues 218 to 227 (FKMVDVGGQR). A G4 motif region spans residues 287-294 (ILFLNKTD). Residues 291 to 294 (NKTD) and Ala349 each bind GTP. The interval 347–352 (TTAINT) is G5 motif.

This sequence belongs to the G-alpha family. G(12) subfamily. As to quaternary structure, g proteins are composed of 3 units; alpha, beta and gamma. The alpha chain contains the guanine nucleotide binding site. Interacts with UBXD5. Interacts with HAX1. Interacts (in GTP-bound form) with PPP5C (via TPR repeats); activates PPP5C phosphatase activity and translocates PPP5C to the cell membrane. Interacts with RGS22. Interacts with ARHGEF1. Interacts (in GTP-bound form) with ARHGEF11 (via RGS domain). Interacts (in GTP-bound form) with ARHGEF12 (via RGS domain). Interacts (in GTP-bound form) with CTNND1. Interacts with GAS2L2. Interacts with GPR35. Interacts with GPR174. In terms of processing, palmitoylation is critical for proper membrane localization and signaling. Phosphorylation on Thr-203 by PKA destabilizes the heterotrimer of alpha, beta and gamma, and inhibits Rho activation.

It is found in the membrane. The protein localises to the melanosome. The protein resides in the cytoplasm. Its subcellular location is the nucleus. Functionally, guanine nucleotide-binding proteins (G proteins) are involved as modulators or transducers in various transmembrane signaling systems. Activates effector molecule RhoA by binding and activating RhoGEFs (ARHGEF1/p115RhoGEF, ARHGEF11/PDZ-RhoGEF and ARHGEF12/LARG). GNA13-dependent Rho signaling subsequently regulates transcription factor AP-1 (activating protein-1). Promotes tumor cell invasion and metastasis by activating RhoA/ROCK signaling pathway. Inhibits CDH1-mediated cell adhesion in process independent from Rho activation. In lymphoid follicles, transmits P2RY8- and S1PR2-dependent signals that lead to inhibition of germinal center (GC) B cell growth and migration outside the GC niche. This is Guanine nucleotide-binding protein subunit alpha-13 (Gna13) from Rattus norvegicus (Rat).